We begin with the raw amino-acid sequence, 378 residues long: Protein RecA (378 aa).

79 to 86 (GPESSGKT) serves as a coordination point for ATP.

The protein belongs to the RecA family.

The protein localises to the cytoplasm. In terms of biological role, can catalyze the hydrolysis of ATP in the presence of single-stranded DNA, the ATP-dependent uptake of single-stranded DNA by duplex DNA, and the ATP-dependent hybridization of homologous single-stranded DNAs. It interacts with LexA causing its activation and leading to its autocatalytic cleavage. In Streptococcus pyogenes serotype M12 (strain MGAS2096), this protein is Protein RecA.